The chain runs to 548 residues: Chaperonin GroEL (548 aa).

Residues 30–33 (TLGP), Lys51, 87–91 (DGTTT), Gly415, 479–481 (NAA), and Asp495 contribute to the ATP site. The tract at residues 526 to 548 (REDKSSDVASSPAGGMGGMGGMM) is disordered. Gly residues predominate over residues 539–548 (GGMGGMGGMM).

It belongs to the chaperonin (HSP60) family. Forms a cylinder of 14 subunits composed of two heptameric rings stacked back-to-back. Interacts with the co-chaperonin GroES.

The protein resides in the cytoplasm. The enzyme catalyses ATP + H2O + a folded polypeptide = ADP + phosphate + an unfolded polypeptide.. Functionally, together with its co-chaperonin GroES, plays an essential role in assisting protein folding. The GroEL-GroES system forms a nano-cage that allows encapsulation of the non-native substrate proteins and provides a physical environment optimized to promote and accelerate protein folding. The polypeptide is Chaperonin GroEL (Buchnera aphidicola subsp. Schizaphis graminum (strain Sg)).